The sequence spans 677 residues: UvrABC system protein B (677 aa).

The region spanning 24 to 412 is the Helicase ATP-binding domain; sequence EGVLQGVPAQ…EGIVVEQVIR (389 aa). 37–44 is a binding site for ATP; sequence GVTGSGKT. A Beta-hairpin motif is present at residues 90–113; that stretch reads YYDYYQPEAYLPNSDTYIEKDLAI. Positions 429–591 constitute a Helicase C-terminal domain; the sequence is QIDDLMEEIQ…ITPQQIKKAR (163 aa). The UVR domain occupies 636–671; that stretch reads EKSIERTRKLMQEAAKKLEFIEAAQYRNELLKLEDL.

The protein belongs to the UvrB family. As to quaternary structure, forms a heterotetramer with UvrA during the search for lesions. Interacts with UvrC in an incision complex.

It is found in the cytoplasm. Its function is as follows. The UvrABC repair system catalyzes the recognition and processing of DNA lesions. A damage recognition complex composed of 2 UvrA and 2 UvrB subunits scans DNA for abnormalities. Upon binding of the UvrA(2)B(2) complex to a putative damaged site, the DNA wraps around one UvrB monomer. DNA wrap is dependent on ATP binding by UvrB and probably causes local melting of the DNA helix, facilitating insertion of UvrB beta-hairpin between the DNA strands. Then UvrB probes one DNA strand for the presence of a lesion. If a lesion is found the UvrA subunits dissociate and the UvrB-DNA preincision complex is formed. This complex is subsequently bound by UvrC and the second UvrB is released. If no lesion is found, the DNA wraps around the other UvrB subunit that will check the other stand for damage. The chain is UvrABC system protein B from Bacteroides thetaiotaomicron (strain ATCC 29148 / DSM 2079 / JCM 5827 / CCUG 10774 / NCTC 10582 / VPI-5482 / E50).